Here is a 785-residue protein sequence, read N- to C-terminus: Phenylalanine--tRNA ligase beta subunit (785 aa).

In terms of domain architecture, tRNA-binding spans 39 to 148 (APAFSGVVIA…ADAPVGQSIR (110 aa)). Positions 399–474 (PKRQAVQLRA…RVYGYNNIPA (76 aa)) constitute a B5 domain. The Mg(2+) site is built by Asp452, Asp458, Glu461, and Glu462. The FDX-ACB domain occupies 692-784 (SKFQPVRRDL…AASELGAQLR (93 aa)).

This sequence belongs to the phenylalanyl-tRNA synthetase beta subunit family. Type 1 subfamily. As to quaternary structure, tetramer of two alpha and two beta subunits. Requires Mg(2+) as cofactor.

It is found in the cytoplasm. The catalysed reaction is tRNA(Phe) + L-phenylalanine + ATP = L-phenylalanyl-tRNA(Phe) + AMP + diphosphate + H(+). The protein is Phenylalanine--tRNA ligase beta subunit of Chromobacterium violaceum (strain ATCC 12472 / DSM 30191 / JCM 1249 / CCUG 213 / NBRC 12614 / NCIMB 9131 / NCTC 9757 / MK).